Consider the following 243-residue polypeptide: Small ribosomal subunit protein uS3 (243 aa).

Residues 39-107 (IRAYLIKELK…ETHLNIVEVR (69 aa)) enclose the KH type-2 domain. Positions 214–243 (ASERRGLEGDAQGPASRERGDRPDRRRENA) are disordered. Basic and acidic residues predominate over residues 229–243 (SRERGDRPDRRRENA).

The protein belongs to the universal ribosomal protein uS3 family. In terms of assembly, part of the 30S ribosomal subunit. Forms a tight complex with proteins S10 and S14.

Binds the lower part of the 30S subunit head. Binds mRNA in the 70S ribosome, positioning it for translation. The polypeptide is Small ribosomal subunit protein uS3 (Agrobacterium fabrum (strain C58 / ATCC 33970) (Agrobacterium tumefaciens (strain C58))).